The sequence spans 557 residues: Leucine-rich glioma-inactivated protein 1 (557 aa).

An N-terminal signal peptide occupies residues 1 to 34 (MESESIRRMGNACIPLKRIAYFLCLFSVVLLTEG). The region spanning 35 to 72 (KKPAKPKCPAVCTCSKDNALCENARSIPRTVPPDVISL) is the LRRNT domain. LRR repeat units follow at residues 92–113 (SLQL…AFIG), 116–137 (HLEY…TFRG), and 140–161 (SLIH…IFKG). The LRRCT domain maps to 173-223 (NSFNCDCKLKWLVEWLGHTNATVEDIYCEGPPEYKKRKINSLSPKDFDCII). N-linked (GlcNAc...) asparagine glycosylation is present at Asn192. EAR repeat units follow at residues 225-267 (EFAK…EWDH), 271-313 (TFRN…KRDG), 317-364 (KFIK…KWNG), 366-415 (GFYS…QWSK), 419-462 (LFIN…KWGG), 464-506 (SFQD…NWDA), and 510-552 (KFVK…KHVI). Asn277 carries N-linked (GlcNAc...) asparagine glycosylation. N-linked (GlcNAc...) asparagine glycosylation occurs at Asn422.

As to quaternary structure, oligomer. Interacts with KCNA1 within a complex containing KCNA1, KCNA4 and KCNAB1. Can bind to ADAM11 and ADAM23. Part of a complex containing ADAM22, DLG4/PSD95 and CACNG2 (stargazin). Glycosylated. As to expression, expressed in brain. High levels found in hippocampus, thalamic nuclei, neocortex, and molecular and granule cell layers of the cerebellum.

Its subcellular location is the secreted. The protein localises to the synapse. It localises to the cytoplasm. In terms of biological role, plays a role in suppressing the production of MMP1/3 through the phosphatidylinositol 3-kinase/ERK pathway. Regulates voltage-gated potassium channels assembled from KCNA1, KCNA4 and KCNAB1. It slows down channel inactivation by precluding channel closure mediated by the KCNAB1 subunit. Ligand for ADAM22 that positively regulates synaptic transmission mediated by AMPA-type glutamate receptors. This chain is Leucine-rich glioma-inactivated protein 1 (Lgi1), found in Rattus norvegicus (Rat).